The chain runs to 503 residues: Cytochrome P450 3A43 (503 aa).

Residue C442 participates in heme binding.

It belongs to the cytochrome P450 family. The cofactor is heme. Highest expression level in prostate. Also expressed in liver, kidney, pancreas, fetal liver and fetal skeletal muscle.

The protein resides in the endoplasmic reticulum membrane. Its subcellular location is the microsome membrane. It carries out the reaction an organic molecule + reduced [NADPH--hemoprotein reductase] + O2 = an alcohol + oxidized [NADPH--hemoprotein reductase] + H2O + H(+). In terms of biological role, exhibits low testosterone 6-beta-hydroxylase activity. The polypeptide is Cytochrome P450 3A43 (CYP3A43) (Homo sapiens (Human)).